A 147-amino-acid chain; its full sequence is Small ribosomal subunit protein uS12 (147 aa).

The protein belongs to the universal ribosomal protein uS12 family. In terms of assembly, part of the 30S ribosomal subunit.

With S4 and S5 plays an important role in translational accuracy. Located at the interface of the 30S and 50S subunits. The sequence is that of Small ribosomal subunit protein uS12 from Sulfurisphaera tokodaii (strain DSM 16993 / JCM 10545 / NBRC 100140 / 7) (Sulfolobus tokodaii).